Consider the following 104-residue polypeptide: Iron-sulfur cluster assembly protein CyaY (104 aa).

It belongs to the frataxin family.

In terms of biological role, involved in iron-sulfur (Fe-S) cluster assembly. May act as a regulator of Fe-S biogenesis. This is Iron-sulfur cluster assembly protein CyaY from Vibrio campbellii (strain ATCC BAA-1116).